A 101-amino-acid chain; its full sequence is Urease subunit beta (101 aa).

The protein belongs to the urease beta subunit family. Heterotrimer of UreA (gamma), UreB (beta) and UreC (alpha) subunits. Three heterotrimers associate to form the active enzyme.

It localises to the cytoplasm. The catalysed reaction is urea + 2 H2O + H(+) = hydrogencarbonate + 2 NH4(+). Its pathway is nitrogen metabolism; urea degradation; CO(2) and NH(3) from urea (urease route): step 1/1. The polypeptide is Urease subunit beta (Pseudomonas aeruginosa (strain LESB58)).